A 50-amino-acid polypeptide reads, in one-letter code: Protein hunchback (50 aa).

C2H2-type zinc fingers lie at residues 1–5 (HLRNH), 11–33 (FKCGKCNYSCANKSMLNSHMKSH), and 39–50 (YRCANCCYATKY).

Belongs to the hunchback C2H2-type zinc-finger protein family.

Its subcellular location is the nucleus. Gap class segmentation protein that controls development of head structures. This chain is Protein hunchback (hb), found in Pholcus phalangioides (Longbodied cellar spider).